The chain runs to 515 residues: UDP-glucosyltransferase 2 (515 aa).

The signal sequence occupies residues 1-20 (MEFRLLILALFSVLMSTSNG). The Lumenal segment spans residues 21-471 (AEILALFPIH…TAGAFLHWYQ (451 aa)). 3 N-linked (GlcNAc...) asparagine glycosylation sites follow: Asn51, Asn236, and Asn303. The chain crosses the membrane as a helical span at residues 472-492 (YLLLDVITFLLVTFCAFCFIV). Topologically, residues 493 to 515 (KYICKALIHHYWSSSKSEKLKKN) are cytoplasmic.

It belongs to the UDP-glycosyltransferase family. Post-translationally, glycosylated.

The protein localises to the endoplasmic reticulum membrane. The catalysed reaction is kermesate + UDP-alpha-D-glucose = carminate + UDP + 2 H(+). It catalyses the reaction flavokermesate + UDP-alpha-D-glucose = flavokermesate 7-C-beta-D-glucoside + UDP + 2 H(+). Functionally, membrane-bound UDP-glucosyltransferase (UGT) which catalyzes the C-glucosylation of kermesate and flavokermesate to produce carminate and flavokermesate 7-C-beta-D-glucoside (dcll) respectively. Carminate is used as a deterrent against insect predators. This is UDP-glucosyltransferase 2 from Dactylopius coccus (Cochineal).